Reading from the N-terminus, the 157-residue chain is 2-C-methyl-D-erythritol 2,4-cyclodiphosphate synthase (157 aa).

Asp8 and His10 together coordinate a divalent metal cation. 4-CDP-2-C-methyl-D-erythritol 2-phosphate is bound by residues 8 to 10 (DVH) and 34 to 35 (HS). An a divalent metal cation-binding site is contributed by His42. 4-CDP-2-C-methyl-D-erythritol 2-phosphate-binding positions include 56–58 (DIG), 61–65 (FPDTD), 100–106 (AQAPKMA), 132–135 (TTTE), Phe139, and Arg142.

It belongs to the IspF family. Homotrimer. Requires a divalent metal cation as cofactor.

The enzyme catalyses 4-CDP-2-C-methyl-D-erythritol 2-phosphate = 2-C-methyl-D-erythritol 2,4-cyclic diphosphate + CMP. It functions in the pathway isoprenoid biosynthesis; isopentenyl diphosphate biosynthesis via DXP pathway; isopentenyl diphosphate from 1-deoxy-D-xylulose 5-phosphate: step 4/6. Functionally, involved in the biosynthesis of isopentenyl diphosphate (IPP) and dimethylallyl diphosphate (DMAPP), two major building blocks of isoprenoid compounds. Catalyzes the conversion of 4-diphosphocytidyl-2-C-methyl-D-erythritol 2-phosphate (CDP-ME2P) to 2-C-methyl-D-erythritol 2,4-cyclodiphosphate (ME-CPP) with a corresponding release of cytidine 5-monophosphate (CMP). This is 2-C-methyl-D-erythritol 2,4-cyclodiphosphate synthase from Ectopseudomonas mendocina (strain ymp) (Pseudomonas mendocina).